A 557-amino-acid chain; its full sequence is Potassium-transporting ATPase potassium-binding subunit (557 aa).

The next 12 membrane-spanning stretches (helical) occupy residues 5 to 25 (GFLL…PLGS), 63 to 83 (LCAI…MLLG), 132 to 152 (GLTV…FAFI), 170 to 190 (LLRI…LFFI), 253 to 273 (FVQM…FGEV), 283 to 303 (LLWA…WAEV), 329 to 349 (VLVS…AVIA), 356 to 376 (ALGG…FGGV), 379 to 399 (GLYG…LMIG), 416 to 436 (LTAL…ALAM), 484 to 504 (LLAF…MAIA), and 526 to 546 (LFVG…FIPA).

The protein belongs to the KdpA family. In terms of assembly, the system is composed of three essential subunits: KdpA, KdpB and KdpC.

Its subcellular location is the cell inner membrane. Functionally, part of the high-affinity ATP-driven potassium transport (or Kdp) system, which catalyzes the hydrolysis of ATP coupled with the electrogenic transport of potassium into the cytoplasm. This subunit binds the periplasmic potassium ions and delivers the ions to the membrane domain of KdpB through an intramembrane tunnel. This is Potassium-transporting ATPase potassium-binding subunit from Shigella flexneri.